The sequence spans 36 residues: Egg-laying hormone (36 aa).

Lys36 is subject to Lysine amide.

This sequence belongs to the molluscan ELH family. In terms of tissue distribution, bag cell neurons.

It localises to the secreted. In terms of biological role, ELH acts as a neurotransmitter locally, upon neurons of the abdominal ganglion and as a hormone by diffusing into the circulating hemolymph and modulating the activity of other organs. It specifically causes contraction of smooth muscle in the ovotestis and expulsion of the egg string. This chain is Egg-laying hormone, found in Aplysia fasciata (Mottled sea hare).